Consider the following 314-residue polypeptide: Pyridoxal 5'-phosphate synthase-like subunit PDX1.2 (314 aa).

Residue Ala2 is modified to N-acetylalanine.

It belongs to the PdxS/SNZ family. Homodimer or heterodimer with PDX1.1 or PDX1.3. No interaction with PDX2. In terms of tissue distribution, expressed in callus tissues, flowers and roots. Weakly expressed in leaves and stems.

It is found in the cytoplasm. In terms of biological role, the protein has no function in the formation of pyridoxal 5'-phosphate. This Arabidopsis thaliana (Mouse-ear cress) protein is Pyridoxal 5'-phosphate synthase-like subunit PDX1.2 (PDX12).